Consider the following 878-residue polypeptide: Aconitate hydratase A (878 aa).

[4Fe-4S] cluster is bound by residues Cys426, Cys492, and Cys495.

Belongs to the aconitase/IPM isomerase family. As to quaternary structure, monomer. [4Fe-4S] cluster is required as a cofactor.

The enzyme catalyses citrate = D-threo-isocitrate. It carries out the reaction (2S,3R)-3-hydroxybutane-1,2,3-tricarboxylate = 2-methyl-cis-aconitate + H2O. Its pathway is carbohydrate metabolism; tricarboxylic acid cycle; isocitrate from oxaloacetate: step 2/2. It functions in the pathway organic acid metabolism; propanoate degradation. Its function is as follows. Involved in the catabolism of short chain fatty acids (SCFA) via the tricarboxylic acid (TCA)(acetyl degradation route) and probably the 2-methylcitrate cycle I (propionate degradation route). Catalyzes the reversible isomerization of citrate to isocitrate via cis-aconitate. Could catalyze the hydration of 2-methyl-cis-aconitate to yield (2R,3S)-2-methylisocitrate. The apo form of AcnA functions as a RNA-binding regulatory protein. The protein is Aconitate hydratase A (acnA) of Rickettsia prowazekii (strain Madrid E).